Reading from the N-terminus, the 572-residue chain is MKQLLQQLLVQSLEVLMDNNILESMPENIRVDHSKDKAQGDFASNIAMLLSEQAQCSSKVLAQKIKANFPDSVDVEKIEIVGPGFINFFMSQSSNALVVEDIIKQGGNYGLSNIGMGQRVLLEFVSANPTGPLHVGHGRGVAYGAAVAHLLRAVGFEVDCEYYVNDAGRQMDILAISVYLRYVETEQFPDNCYKGDYIFDIAKKISGVKKLDIFTNTCKDTSEWKVQKNSIDKERYIDDLIANCKLQLGSDYRKVFDFAINSILSDIKIDLADFGVEYHQWFSEQSLVDSGLSEEIVKKLQDLGYIYEKEGALWFRTTDFGDDLDRVVVRDNGIHTYFSYDIAYHLGKFERGYDRIINIWGADHHGYIARVKASIKALNYNPDKLEILLVQFVNLFRDGKKVSMSTRSGSFITLKELREEVGNDVVRFFYILRKSTQHMDFNLDLAKSKSNENPVFYIQYAYVRICSVLKQGMPFMADIDLLVLNNELETLLIKELNRYKDILQSSALNYEPHVLACYLRKLAGYFHSYYNNCEFLVDDDKLRNSRLLLITAVQQILANGLNLLGISTPNSM.

The 'HIGH' region signature appears at A127 to H137.

It belongs to the class-I aminoacyl-tRNA synthetase family. Monomer.

The protein localises to the cytoplasm. The catalysed reaction is tRNA(Arg) + L-arginine + ATP = L-arginyl-tRNA(Arg) + AMP + diphosphate. This Vesicomyosocius okutanii subsp. Calyptogena okutanii (strain HA) protein is Arginine--tRNA ligase.